The chain runs to 362 residues: 11-beta-hydroxysteroid dehydrogenase B (362 aa).

The chain crosses the membrane as a helical; Signal-anchor for type II membrane protein span at residues 10–30 (FVVPPASLLMLAFTWPTLFFI). The Proline-knob signature appears at 13–26 (PPASLLMLAFTWPT). Position 55 to 81 (55 to 81 (GASSGIGEQIAYQYAKRGANLVLVARR)) interacts with NADP(+). Residue Ser-185 coordinates substrate. The active-site Proton acceptor is Tyr-198. NADP(+) is bound by residues 198–202 (YSAAK) and Lys-202. The tract at residues 321 to 362 (TGRPLLETSSPRRSAVMEGSSPRRLPPGPLTFSPAFQQQKSE) is disordered.

Belongs to the short-chain dehydrogenases/reductases (SDR) family. As to expression, expressed in seeds (at protein level). Not expressed in stem, leaf or root (at protein level).

It localises to the lipid droplet. Its subcellular location is the membrane. The enzyme catalyses an 11beta-hydroxysteroid + NADP(+) = an 11-oxosteroid + NADPH + H(+). It carries out the reaction corticosterone + NADP(+) = 11-dehydrocorticosterone + NADPH + H(+). It catalyses the reaction 17beta-estradiol + NADP(+) = estrone + NADPH + H(+). Its function is as follows. Has dehydrogenase activity against corticosterone (11 beta-hydroxysteroid) and estradiol (17 beta-hydroxysteroid), with similar activities to both sterols in the presence of NADP(+), but negligible activity to either sterol in the presence of NAD(+). May be involved in signal transduction regulated by various sterols. This is 11-beta-hydroxysteroid dehydrogenase B from Sesamum indicum (Oriental sesame).